The primary structure comprises 98 residues: La1-like protein 13 (98 aa).

The first 24 residues, 1 to 24, serve as a signal peptide directing secretion; it reads MERILKPVFLAILIVLSFSSQCMG. Position 97 is a lysine amide (Lys97).

This sequence belongs to the scorpion La1-like peptide family. Post-translationally, contains 4 disulfide bonds. As to expression, expressed by the venom gland.

It localises to the secreted. This is La1-like protein 13 from Urodacus yaschenkoi (Inland robust scorpion).